Here is a 710-residue protein sequence, read N- to C-terminus: E3 ubiquitin-protein ligase TRIM9 (710 aa).

Residues 10–50 form an RING-type zinc finger; sequence CPVCGSFYREPIILPCSHNICQACARNILVQTPESESPQSR. The residue at position 41 (Thr41) is a Phosphothreonine. Phosphoserine occurs at positions 44, 46, 49, and 53. B box-type zinc fingers lie at residues 163–212 and 224–266; these read AAAL…LVPP and RKVS…VKAL. Zn(2+) is bound by residues Cys168, Cys171, Cys193, His198, Cys229, His232, Cys252, and His258. A coiled-coil region spans residues 273-340; the sequence is HKSQLSQALN…KAQLLARVNK (68 aa). One can recognise a COS domain in the interval 374–432; that stretch reads IKENDPSGFLQISDALIRRVHLTEDQWGKGTLTPRMTTDFDLSLDNSPLLQSIHQLDFV. The 96-residue stretch at 440 to 535 folds into the Fibronectin type-III domain; that stretch reads VPATPILQLE…KTLVLQTSEV (96 aa). Residues 533–702 form the B30.2/SPRY domain; the sequence is SEVAWFAFDP…LHTGLQVPDF (170 aa).

The protein belongs to the TRIM/RBCC family. Interacts with SNAP25. Auto-ubiquitinated.

It localises to the cytoplasm. It is found in the cell projection. Its subcellular location is the dendrite. The protein localises to the cytoplasmic vesicle. The protein resides in the secretory vesicle. It localises to the synaptic vesicle. It is found in the synapse. Its subcellular location is the cytoskeleton. The enzyme catalyses S-ubiquitinyl-[E2 ubiquitin-conjugating enzyme]-L-cysteine + [acceptor protein]-L-lysine = [E2 ubiquitin-conjugating enzyme]-L-cysteine + N(6)-ubiquitinyl-[acceptor protein]-L-lysine.. It participates in protein modification; protein ubiquitination. Functionally, E3 ubiquitin-protein ligase which ubiquitinates itself in cooperation with an E2 enzyme UBE2D2/UBC4 and serves as a targeting signal for proteasomal degradation. May play a role in regulation of neuronal functions. May act as a regulator of synaptic vesicle exocytosis by controlling the availability of SNAP25 for the SNARE complex formation. The protein is E3 ubiquitin-protein ligase TRIM9 (TRIM9) of Bos taurus (Bovine).